Here is a 603-residue protein sequence, read N- to C-terminus: MASASTSKYNSHSLENESIKRTSRDGVNRDLTEAVPRLPGETLITDKEVIYICPFNGPIKGRVYITNYRLYLRSLETDSALILDVPLGVISRIEKMGGATSRGENSYGLDITCKDMRNLRFALKQEGHSRRDMFEILTRYAFPLAHSLPLFAFLNEEKFNVDGWTVYNPVEEYRRQGLPNHHWRITFINKCYELCDTYPAPLVVPYRASDDDLRRVATFRSRNRIPVLSWIHPENKTVIVRCSQPLVGMSGKRNKDDEKYLDVIRETNKQISKLTIYDARPSVNAVANKATGGGYESDDAYHNAELFFLDIHNIHVMRESLKKVKDIVYPNVEESHWLSSLESTHWLEHIKLVLTGAIQVADKVSSGKSSVLVHCSDGWDRTAQLTSLAMLMLDSFYRSIEGFEILVQKEWISFGHKFASRIGHGDKNHTDADRSPIFLQFIDCVWQMSKQFPTAFEFNEQFLIIILDHLYSCRFGTFLFNCESARERQKVTERTVSLWSLINSNKEKFKNPFYTKEINRVLYPVASMRHLELWVNYYIRWNPRIKQQQPNPVEQRYMELLALRDEYIKRLEELQLANSAKLSDPPTSPSSPSQMMPHVQTHF.

Residues 1 to 13 are compositionally biased toward polar residues; sequence MASASTSKYNSHS. Residues 1-25 form a disordered region; that stretch reads MASASTSKYNSHSLENESIKRTSRD. Ser-13 and Ser-18 each carry phosphoserine. Positions 14-25 are enriched in basic and acidic residues; it reads LENESIKRTSRD. The GRAM domain occupies 29 to 97; that stretch reads RDLTEAVPRL…GVISRIEKMG (69 aa). Residues 163–538 enclose the Myotubularin phosphatase domain; that stretch reads GWTVYNPVEE…RHLELWVNYY (376 aa). A 1,2-diacyl-sn-glycero-3-phospho-(1D-myo-inositol-3,5-bisphosphate) contacts are provided by Asn-288, Asn-313, and Ile-314. A 1,2-diacyl-sn-glycero-3-phospho-(1D-myo-inositol-3-phosphate) contacts are provided by Asn-288, Asn-313, and Ile-314. Cys-375 (phosphocysteine intermediate) is an active-site residue. Residues Ser-376, Asp-377, Gly-378, Trp-379, Asp-380, Arg-381, Lys-417, and Arg-421 each contribute to the a 1,2-diacyl-sn-glycero-3-phospho-(1D-myo-inositol-3,5-bisphosphate) site. 6 residues coordinate a 1,2-diacyl-sn-glycero-3-phospho-(1D-myo-inositol-3-phosphate): Ser-376, Asp-377, Gly-378, Trp-379, Asp-380, and Arg-381. Arg-421 is an a 1,2-diacyl-sn-glycero-3-phospho-(1D-myo-inositol-3-phosphate) binding site. Phosphothreonine is present on Thr-495. The segment at 579–603 is disordered; it reads SAKLSDPPTSPSSPSQMMPHVQTHF. Ser-588 bears the Phosphoserine mark.

This sequence belongs to the protein-tyrosine phosphatase family. Non-receptor class myotubularin subfamily. As to quaternary structure, heterodimer with MTMR12. Interacts with KMT2A/MLL1 (via SET domain). Interacts with DES in skeletal muscle but not in cardiac muscle. Interacts with SPEG.

The protein localises to the cytoplasm. The protein resides in the cell membrane. It localises to the cell projection. Its subcellular location is the filopodium. It is found in the ruffle. The protein localises to the late endosome. The protein resides in the myofibril. It localises to the sarcomere. The catalysed reaction is a 1,2-diacyl-sn-glycero-3-phospho-(1D-myo-inositol-3-phosphate) + H2O = a 1,2-diacyl-sn-glycero-3-phospho-(1D-myo-inositol) + phosphate. It carries out the reaction a 1,2-diacyl-sn-glycero-3-phospho-(1D-myo-inositol-3,5-bisphosphate) + H2O = a 1,2-diacyl-sn-glycero-3-phospho-(1D-myo-inositol-5-phosphate) + phosphate. The enzyme catalyses 1,2-dioctanoyl-sn-glycero-3-phospho-(1-D-myo-inositol-3-phosphate) + H2O = 1,2-dioctanoyl-sn-glycero-3-phospho-(1D-myo-inositol) + phosphate. It catalyses the reaction 1,2-dioctanoyl-sn-glycero-3-phospho-(1D-myo-inositol-3,5-bisphosphate) + H2O = 1,2-dioctanoyl-sn-glycero-3-phospho-(1D-myo-inositol-5-phosphate) + phosphate. The catalysed reaction is 1,2-dihexadecanoyl-sn-glycero-3-phospho-(1D-myo-inositol-3,5-phosphate) + H2O = 1,2-dihexadecanoyl-sn-glycero-3-phospho-(1D-myo-inositol-5-phosphate) + phosphate. Allosterically activated by phosphatidylinositol 5-phosphate (PI5P). Its function is as follows. Lipid phosphatase which dephosphorylates phosphatidylinositol 3-monophosphate (PI3P) and phosphatidylinositol 3,5-bisphosphate (PI(3,5)P2). Has also been shown to dephosphorylate phosphotyrosine- and phosphoserine-containing peptides. Negatively regulates EGFR degradation through regulation of EGFR trafficking from the late endosome to the lysosome. Plays a role in vacuolar formation and morphology. Regulates desmin intermediate filament assembly and architecture. Plays a role in mitochondrial morphology and positioning. Required for skeletal muscle maintenance but not for myogenesis. In skeletal muscles, stabilizes MTMR12 protein levels. This chain is Myotubularin, found in Pongo abelii (Sumatran orangutan).